A 302-amino-acid chain; its full sequence is ATP synthase gamma chain (302 aa).

It belongs to the ATPase gamma chain family. F-type ATPases have 2 components, CF(1) - the catalytic core - and CF(0) - the membrane proton channel. CF(1) has five subunits: alpha(3), beta(3), gamma(1), delta(1), epsilon(1). CF(0) has three main subunits: a, b and c.

It is found in the cell membrane. Its function is as follows. Produces ATP from ADP in the presence of a proton gradient across the membrane. The gamma chain is believed to be important in regulating ATPase activity and the flow of protons through the CF(0) complex. This chain is ATP synthase gamma chain, found in Leuconostoc citreum (strain KM20).